The following is a 296-amino-acid chain: Deleted in azoospermia-like (296 aa).

The span at 1–18 (MSAANPETPNSTISREAN) shows a compositional bias: polar residues. The segment at 1–25 (MSAANPETPNSTISREANTQSSSAA) is disordered. An RRM domain is found at 40–115 (NTVFVGGIDV…KKLKLGPAIR (76 aa)). Residues 80 to 132 (KGYGFVSFFNDVDVQKIVESQINFHGKKLKLGPAIRKQNLCAYHVQPRPLVFN) form a homodimerization region. Positions 167–190 (AYPPYPNSPVQVITGYQLPVYNYQ) constitute a DAZ domain. Position 277 is a phosphotyrosine (Y277).

This sequence belongs to the RRM DAZ family. In terms of assembly, homodimer and heterodimer. Forms a heterodimer with DAZ. Interacts with BOLL, DAZAP1 and DAZAP2. Interacts with PUM2 Multiple DAZL RRMs can bind to a single RNA containing multiple GUU triplets. In terms of tissue distribution, testis specific.

It localises to the cytoplasm. It is found in the nucleus. Functionally, RNA-binding protein, which is essential for gametogenesis in both males and females. Plays a central role during spermatogenesis. Acts by binding to the 3'-UTR of mRNA, specifically recognizing GUU triplets, and thereby regulating the translation of key transcripts. The sequence is that of Deleted in azoospermia-like (DAZL) from Callithrix jacchus (White-tufted-ear marmoset).